A 423-amino-acid chain; its full sequence is Histidine--tRNA ligase (423 aa).

It belongs to the class-II aminoacyl-tRNA synthetase family. As to quaternary structure, homodimer.

It localises to the cytoplasm. It catalyses the reaction tRNA(His) + L-histidine + ATP = L-histidyl-tRNA(His) + AMP + diphosphate + H(+). In Rhodococcus opacus (strain B4), this protein is Histidine--tRNA ligase.